A 334-amino-acid chain; its full sequence is Probable N5-carboxyaminoimidazole ribonucleotide mutase (334 aa).

The substrate site is built by serine 11, aspartate 14, and arginine 41.

It belongs to the AIR carboxylase family. Class I subfamily.

The catalysed reaction is 5-carboxyamino-1-(5-phospho-D-ribosyl)imidazole + H(+) = 5-amino-1-(5-phospho-D-ribosyl)imidazole-4-carboxylate. Its pathway is purine metabolism; IMP biosynthesis via de novo pathway; 5-amino-1-(5-phospho-D-ribosyl)imidazole-4-carboxylate from 5-amino-1-(5-phospho-D-ribosyl)imidazole (N5-CAIR route): step 2/2. Functionally, catalyzes the conversion of N5-carboxyaminoimidazole ribonucleotide (N5-CAIR) to 4-carboxy-5-aminoimidazole ribonucleotide (CAIR). The chain is Probable N5-carboxyaminoimidazole ribonucleotide mutase from Methanothermobacter thermautotrophicus (strain ATCC 29096 / DSM 1053 / JCM 10044 / NBRC 100330 / Delta H) (Methanobacterium thermoautotrophicum).